A 559-amino-acid polypeptide reads, in one-letter code: U-box domain-containing protein 41 (559 aa).

Disordered stretches follow at residues 1–30 and 121–156; these read MGGNKQRWFSFHQRSSSATTTTLPQHKHDE and RMDKDPNPSPGQSPGPGDKDPEPEILPPVEENSPSD. Residues 12–24 are compositionally biased toward polar residues; sequence HQRSSSATTTTLP. Residues 30–104 enclose the U-box domain; it reads ETPPEFLCPI…FSWCDRQKVD (75 aa). ARM repeat units lie at residues 266-305, 307-346, 348-388, 390-427, and 428-472; these read EDLRVSLCTDRILSFLRSLLVSRYNLVQTNAAASVVNLSL, KQNKVKIVRSGFVPLLIDVLKSGTTEAQEHVAGALFSLAL, DENK…HLSL, PSNRTRLVRAGAVPTLLSMVRSGDSTSRILLVLCNLAA, and CPDG…TLCQ.

The catalysed reaction is S-ubiquitinyl-[E2 ubiquitin-conjugating enzyme]-L-cysteine + [acceptor protein]-L-lysine = [E2 ubiquitin-conjugating enzyme]-L-cysteine + N(6)-ubiquitinyl-[acceptor protein]-L-lysine.. The protein operates within protein modification; protein ubiquitination. Its function is as follows. Functions as an E3 ubiquitin ligase. The polypeptide is U-box domain-containing protein 41 (PUB41) (Arabidopsis thaliana (Mouse-ear cress)).